The sequence spans 322 residues: ATP-dependent 6-phosphofructokinase (322 aa).

Gly-11 is an ATP binding site. An ADP-binding site is contributed by 21 to 25 (RAVVR). Residues 72-73 (RC) and 102-105 (GDGS) contribute to the ATP site. Asp-103 is a Mg(2+) binding site. 127-129 (TID) lines the substrate pocket. Asp-129 serves as the catalytic Proton acceptor. An ADP-binding site is contributed by Arg-156. Substrate-binding positions include Arg-164 and 171–173 (MGR). ADP contacts are provided by residues 187–189 (GAE), Arg-213, and 215–217 (KKH). Substrate contacts are provided by residues Glu-224, Arg-245, and 251–254 (HVQR).

This sequence belongs to the phosphofructokinase type A (PFKA) family. ATP-dependent PFK group I subfamily. Prokaryotic clade 'B1' sub-subfamily. In terms of assembly, homotetramer. Requires Mg(2+) as cofactor.

The protein resides in the cytoplasm. It catalyses the reaction beta-D-fructose 6-phosphate + ATP = beta-D-fructose 1,6-bisphosphate + ADP + H(+). The protein operates within carbohydrate degradation; glycolysis; D-glyceraldehyde 3-phosphate and glycerone phosphate from D-glucose: step 3/4. Allosterically activated by ADP and other diphosphonucleosides, and allosterically inhibited by phosphoenolpyruvate. Functionally, catalyzes the phosphorylation of D-fructose 6-phosphate to fructose 1,6-bisphosphate by ATP, the first committing step of glycolysis. This Staphylococcus aureus (strain MRSA252) protein is ATP-dependent 6-phosphofructokinase.